Here is a 155-residue protein sequence, read N- to C-terminus: Small ribosomal subunit protein uS7cz/uS7cy (155 aa).

Belongs to the universal ribosomal protein uS7 family. As to quaternary structure, part of the 30S ribosomal subunit.

The protein localises to the plastid. Its subcellular location is the chloroplast. Its function is as follows. One of the primary rRNA binding proteins, it binds directly to 16S rRNA where it nucleates assembly of the head domain of the 30S subunit. The protein is Small ribosomal subunit protein uS7cz/uS7cy (rps7-A) of Angiopteris evecta (Mule's foot fern).